We begin with the raw amino-acid sequence, 382 residues long: UBP1-associated proteins 1B (382 aa).

Positions 1-99 (MAKEGEERKK…SDESEEIVDS (99 aa)) are disordered. Basic residues predominate over residues 10 to 22 (KEKKEKKERKERK). Over residues 23–34 (RREAEELAVREK) the composition is skewed to basic and acidic residues. One can recognise an RRM domain in the interval 163–248 (RNIFVRGLGW…RPFNSGKPRE (86 aa)).

Its subcellular location is the nucleus. Functionally, acts as a component of a complex regulating the turnover of mRNAs in the nucleus. Binds with high affinity to RNA molecules that contain U-rich sequences in 3'-UTRs. May function in complex with UBP1 and contribute to the stabilization of mRNAs in the nucleus. The chain is UBP1-associated proteins 1B (UBA1B) from Arabidopsis thaliana (Mouse-ear cress).